Here is a 302-residue protein sequence, read N- to C-terminus: tRNA pseudouridine synthase B (302 aa).

Residue Asp-43 is the Nucleophile of the active site.

The protein belongs to the pseudouridine synthase TruB family. Type 1 subfamily.

The catalysed reaction is uridine(55) in tRNA = pseudouridine(55) in tRNA. Functionally, responsible for synthesis of pseudouridine from uracil-55 in the psi GC loop of transfer RNAs. This Burkholderia pseudomallei (strain 668) protein is tRNA pseudouridine synthase B.